The sequence spans 223 residues: MSIFDRLSRLLRANVNDMISKAEDPAKIIDQALRDMRSAYADARNEVAGAMAQAAKLEREAGTNSKLAAEYEKKAEEALRGGSEDLAREALRRAQNHKDLAKGFDEQRTVQQSTVDQLKTQLRALEAKIDEMESKKTLLAARQKTAQAGETLDRVSGFSKAGGAMDAFNEMEQKVAGMEDRNKAMGELRNDQDFDAQLKDLGRDKDVDDALAALKAKVQSSNQ.

A coiled-coil region spans residues 29–185; sequence IDQALRDMRS…AGMEDRNKAM (157 aa).

This sequence belongs to the PspA/Vipp/IM30 family.

This is Phage shock protein A homolog from Deinococcus radiodurans (strain ATCC 13939 / DSM 20539 / JCM 16871 / CCUG 27074 / LMG 4051 / NBRC 15346 / NCIMB 9279 / VKM B-1422 / R1).